We begin with the raw amino-acid sequence, 291 residues long: 4-hydroxy-tetrahydrodipicolinate synthase (291 aa).

Threonine 44 contacts pyruvate. Tyrosine 132 (proton donor/acceptor) is an active-site residue. Lysine 160 serves as the catalytic Schiff-base intermediate with substrate. Isoleucine 202 provides a ligand contact to pyruvate.

Belongs to the DapA family. As to quaternary structure, homotetramer; dimer of dimers.

It localises to the cytoplasm. The enzyme catalyses L-aspartate 4-semialdehyde + pyruvate = (2S,4S)-4-hydroxy-2,3,4,5-tetrahydrodipicolinate + H2O + H(+). Its pathway is amino-acid biosynthesis; L-lysine biosynthesis via DAP pathway; (S)-tetrahydrodipicolinate from L-aspartate: step 3/4. In terms of biological role, catalyzes the condensation of (S)-aspartate-beta-semialdehyde [(S)-ASA] and pyruvate to 4-hydroxy-tetrahydrodipicolinate (HTPA). This is 4-hydroxy-tetrahydrodipicolinate synthase from Rhodospirillum centenum (strain ATCC 51521 / SW).